We begin with the raw amino-acid sequence, 321 residues long: Porin Omp2a (321 aa).

The first 22 residues, 1-22 (MNIKSLLLGSAAALVAASGAQA), serve as a signal peptide directing secretion.

This sequence belongs to the alphaproteobacteria porin family. In terms of assembly, monomer.

It localises to the cell outer membrane. Forms passive diffusion pores that allow small molecular weight hydrophilic materials across the outer membrane. This Brucella abortus (strain S19) protein is Porin Omp2a (omp2a).